Reading from the N-terminus, the 157-residue chain is Putative tRNA (cytidine(34)-2'-O)-methyltransferase (157 aa).

The S-adenosyl-L-methionine site is built by isoleucine 79, glycine 104, and isoleucine 125.

The protein belongs to the class IV-like SAM-binding methyltransferase superfamily. RNA methyltransferase TrmH family. TrmL subfamily.

The protein resides in the cytoplasm. It carries out the reaction cytidine(34) in tRNA + S-adenosyl-L-methionine = 2'-O-methylcytidine(34) in tRNA + S-adenosyl-L-homocysteine + H(+). The enzyme catalyses 5-carboxymethylaminomethyluridine(34) in tRNA(Leu) + S-adenosyl-L-methionine = 5-carboxymethylaminomethyl-2'-O-methyluridine(34) in tRNA(Leu) + S-adenosyl-L-homocysteine + H(+). Could methylate the ribose at the nucleotide 34 wobble position in tRNA. The polypeptide is Putative tRNA (cytidine(34)-2'-O)-methyltransferase (Geobacillus stearothermophilus (Bacillus stearothermophilus)).